A 293-amino-acid polypeptide reads, in one-letter code: MSEPKNKRQKREDYRAALRANGVTELPRKKFYRQRAHANPFSDHSLIYPPTPEQMDWASLYPHYAVEEPIEQKTETTESEESTGQELSAPAIRKLTKQVEVADIGCGFGGLLIALAPVLPETLVLGLEIRVSVTQFVEDRIKALRVQNEEQKLYRNIAVLRANTMKFMPNFFNKGQLNKIFICFPDPHFKARKHKQRIVSTTLNSEYAYVLRPGGIVYTITDVPDLHEWMVGHFNAHPAFERVSVEEQEADPLVEIMRNETEEGKKVTRHNGQKHVALFRRLEDPQWPEDVSA.

S-adenosyl-L-methionine contacts are provided by residues G105, 128-129 (EI), 163-164 (NT), and C183. Residue D186 is part of the active site. Residue 261–263 (TEE) coordinates S-adenosyl-L-methionine.

It belongs to the class I-like SAM-binding methyltransferase superfamily. TrmB family. As to quaternary structure, forms a complex with trm82.

The protein resides in the nucleus. It catalyses the reaction guanosine(46) in tRNA + S-adenosyl-L-methionine = N(7)-methylguanosine(46) in tRNA + S-adenosyl-L-homocysteine. Its pathway is tRNA modification; N(7)-methylguanine-tRNA biosynthesis. In terms of biological role, catalyzes the formation of N(7)-methylguanine at position 46 (m7G46) in tRNA. The sequence is that of tRNA (guanine-N(7)-)-methyltransferase (trm8) from Neurospora crassa (strain ATCC 24698 / 74-OR23-1A / CBS 708.71 / DSM 1257 / FGSC 987).